The chain runs to 791 residues: Nuclear cap-binding protein subunit 1-B (791 aa).

The interval 1-24 is disordered; that stretch reads MSRRRHSDENDGGQPHKRRRTSEP. Positions 28 to 240 constitute an MIF4G domain; sequence EDRLESLICR…CLWAQVQKLK (213 aa). The stretch at 641-714 forms a coiled coil; it reads LHSTIRKMNK…SEQKNLFLVI (74 aa). The interval 664 to 687 is disordered; sequence QRLAKQHKHRDSDDNDEDSGRKDG.

The protein belongs to the NCBP1 family. Component of the nuclear cap-binding complex (CBC), a heterodimer composed of ncbp1/cbp80 and ncbp2/cbp20 that interacts with m7GpppG-capped RNA. Component of an alternative nuclear cap-binding complex (CBC) composed of ncbp1/cbp80 and ncbp3.

It localises to the nucleus. It is found in the cytoplasm. Component of the cap-binding complex (CBC), which binds cotranscriptionally to the 5'-cap of pre-mRNAs and is involved in various processes such as pre-mRNA splicing, translation regulation, nonsense-mediated mRNA decay, RNA-mediated gene silencing (RNAi) by microRNAs (miRNAs) and mRNA export. The CBC complex is involved in mRNA export from the nucleus, leading to the recruitment of the mRNA export machinery to the 5'-end of mRNA and to mRNA export in a 5' to 3' direction through the nuclear pore. The CBC complex is also involved in mediating U snRNA and intronless mRNAs export from the nucleus. The CBC complex is essential for a pioneer round of mRNA translation, before steady state translation when the CBC complex is replaced by cytoplasmic cap-binding protein eIF4E. The pioneer round of mRNA translation mediated by the CBC complex plays a central role in nonsense-mediated mRNA decay (NMD), NMD only taking place in mRNAs bound to the CBC complex, but not on eIF4E-bound mRNAs. The CBC complex enhances NMD in mRNAs containing at least one exon-junction complex (EJC), promoting the interaction between UPF1 and UPF2. The CBC complex is also involved in 'failsafe' NMD, which is independent of the EJC complex, while it does not participate in Staufen-mediated mRNA decay (SMD). During cell proliferation, the CBC complex is also involved in microRNAs (miRNAs) biogenesis via its interaction with SRRT/ARS2 and is required for miRNA-mediated RNA interference. The CBC complex also acts as a negative regulator of parn, thereby acting as an inhibitor of mRNA deadenylation. In the CBC complex, NCBP1/CBP80 does not bind directly capped RNAs (m7GpppG-capped RNA) but is required to stabilize the movement of the N-terminal loop of NCBP2/CBP20 and lock the CBC into a high affinity cap-binding state with the cap structure. Associates with NCBP3 to form an alternative cap-binding complex (CBC) which plays a key role in mRNA export. The conventional CBC with NCBP2 binds both small nuclear RNA (snRNA) and messenger (mRNA) and is involved in their export from the nucleus whereas the alternative CBC with NCBP3 does not bind snRNA and associates only with mRNA thereby playing a role only in mRNA export. The sequence is that of Nuclear cap-binding protein subunit 1-B (ncbp1-b) from Xenopus laevis (African clawed frog).